We begin with the raw amino-acid sequence, 457 residues long: Multidrug resistance protein MdtK (457 aa).

The next 12 membrane-spanning stretches (helical) occupy residues 11 to 31, 46 to 66, 93 to 113, 127 to 147, 160 to 180, 188 to 208, 243 to 263, 283 to 301, 316 to 336, 357 to 377, 387 to 407, and 418 to 438; these read LLAL…MGVV, AVAV…GLLL, WLAL…DHVI, AVGF…FQVL, GMVI…IFIY, LGGV…FLMM, LPVA…ALLV, LMFM…RVGF, YTSM…TIVF, LMLL…GSGV, IFFI…YLLG, and PAGF…LMVL.

Belongs to the multi antimicrobial extrusion (MATE) (TC 2.A.66.1) family. MdtK subfamily.

It is found in the cell inner membrane. In terms of biological role, multidrug efflux pump that functions probably as a Na(+)/drug antiporter. In Yersinia pseudotuberculosis serotype IB (strain PB1/+), this protein is Multidrug resistance protein MdtK.